The sequence spans 766 residues: FYVE, RhoGEF and PH domain-containing protein 4 (766 aa).

3 disordered regions span residues 1 to 20 (MEEI…PSKV), 46 to 83 (NLNA…DKTQ), and 134 to 188 (ETAT…ESPL). The tract at residues 1–150 (MEEIKPASAS…SPTTDSCDGN (150 aa)) is actin filament-binding. Polar residues-rich tracts occupy residues 58–83 (LTTT…DKTQ) and 145–157 (DSCD…SSYR). Positions 167-184 (LEERGAETETKVQERENG) are enriched in basic and acidic residues. The 188-residue stretch at 206–393 (KLHKIANELL…STAASHSNSA (188 aa)) folds into the DH domain. A PH 1 domain is found at 422–521 (ELIKEGQILK…WIKALQETID (100 aa)). The FYVE-type zinc-finger motif lies at 559–619 (DNEVTMCMKC…VCKDCYQIIS (61 aa)). Cys-565, Cys-568, Cys-582, Cys-585, Cys-590, Cys-593, Cys-611, and Cys-614 together coordinate Zn(2+). Residues 643–740 (NSVVCSFLQY…WLKVILLAVT (98 aa)) enclose the PH 2 domain. A phosphoserine mark is found at Ser-702 and Ser-716. Positions 742–766 (ETPGGPNEHPATLDDHPEPKKKSEC) are disordered. Over residues 752-766 (ATLDDHPEPKKKSEC) the composition is skewed to basic and acidic residues.

As to quaternary structure, homooligomer. As to expression, expressed in different tissues, including brain, cerebellum, peripheral nerve, skeletal muscle, heart, uterus, placenta and testis.

It localises to the cytoplasm. Its subcellular location is the cytoskeleton. It is found in the cell projection. The protein localises to the filopodium. Its function is as follows. Activates CDC42, a member of the Ras-like family of Rho- and Rac proteins, by exchanging bound GDP for free GTP. Plays a role in regulating the actin cytoskeleton and cell shape. Activates MAPK8. This Homo sapiens (Human) protein is FYVE, RhoGEF and PH domain-containing protein 4 (FGD4).